The sequence spans 286 residues: Ribonuclease Z (286 aa).

Residues His-61, His-63, Asp-65, His-66, His-153, Asp-176, and His-240 each coordinate Zn(2+). Asp-65 serves as the catalytic Proton acceptor.

The protein belongs to the RNase Z family. As to quaternary structure, homodimer. The cofactor is Zn(2+).

It catalyses the reaction Endonucleolytic cleavage of RNA, removing extra 3' nucleotides from tRNA precursor, generating 3' termini of tRNAs. A 3'-hydroxy group is left at the tRNA terminus and a 5'-phosphoryl group is left at the trailer molecule.. In terms of biological role, zinc phosphodiesterase, which displays some tRNA 3'-processing endonuclease activity. Probably involved in tRNA maturation, by removing a 3'-trailer from precursor tRNA. The sequence is that of Ribonuclease Z from Mycolicibacterium gilvum (strain PYR-GCK) (Mycobacterium gilvum (strain PYR-GCK)).